A 166-amino-acid polypeptide reads, in one-letter code: Large ribosomal subunit protein uL10 (166 aa).

Belongs to the universal ribosomal protein uL10 family. In terms of assembly, part of the ribosomal stalk of the 50S ribosomal subunit. The N-terminus interacts with L11 and the large rRNA to form the base of the stalk. The C-terminus forms an elongated spine to which L12 dimers bind in a sequential fashion forming a multimeric L10(L12)X complex.

Its function is as follows. Forms part of the ribosomal stalk, playing a central role in the interaction of the ribosome with GTP-bound translation factors. The chain is Large ribosomal subunit protein uL10 from Ectopseudomonas mendocina (strain ymp) (Pseudomonas mendocina).